We begin with the raw amino-acid sequence, 374 residues long: Pectate lyase 3 (374 aa).

Positions 1 to 22 are cleaved as a signal peptide; that stretch reads MKYLLPSTAAGLLLLAAQPTMA. The cysteines at positions 93 and 176 are disulfide-linked. Positions 150, 152, 187, and 191 each coordinate Ca(2+). Arg-239 is an active-site residue. Cys-350 and Cys-373 form a disulfide bridge.

Belongs to the polysaccharide lyase 1 family. PLADES subfamily. Ca(2+) serves as cofactor.

It localises to the secreted. The enzyme catalyses Eliminative cleavage of (1-&gt;4)-alpha-D-galacturonan to give oligosaccharides with 4-deoxy-alpha-D-galact-4-enuronosyl groups at their non-reducing ends.. Its pathway is glycan metabolism; pectin degradation; 2-dehydro-3-deoxy-D-gluconate from pectin: step 2/5. Involved in maceration and soft-rotting of plant tissue. The protein is Pectate lyase 3 (pel3) of Pectobacterium atrosepticum (strain SCRI 1043 / ATCC BAA-672) (Erwinia carotovora subsp. atroseptica).